The primary structure comprises 1243 residues: ATP-dependent helicase/nuclease subunit A (1243 aa).

Residues 2-475 (VNWTKEQEEA…IDLARNFRSR (474 aa)) form the UvrD-like helicase ATP-binding domain. 23-30 (AAAGSGKT) contributes to the ATP binding site. A UvrD-like helicase C-terminal domain is found at 502 to 803 (AAELIYGNKM…RIMTIHKSKG (302 aa)).

This sequence belongs to the helicase family. AddA subfamily. In terms of assembly, heterodimer of AddA and AddB/RexB. The cofactor is Mg(2+).

It catalyses the reaction Couples ATP hydrolysis with the unwinding of duplex DNA by translocating in the 3'-5' direction.. The catalysed reaction is ATP + H2O = ADP + phosphate + H(+). Functionally, the heterodimer acts as both an ATP-dependent DNA helicase and an ATP-dependent, dual-direction single-stranded exonuclease. Recognizes the chi site generating a DNA molecule suitable for the initiation of homologous recombination. The AddA nuclease domain is required for chi fragment generation; this subunit has the helicase and 3' -&gt; 5' nuclease activities. The sequence is that of ATP-dependent helicase/nuclease subunit A from Oceanobacillus iheyensis (strain DSM 14371 / CIP 107618 / JCM 11309 / KCTC 3954 / HTE831).